We begin with the raw amino-acid sequence, 106 residues long: Large ribosomal subunit protein bL21 (106 aa).

Belongs to the bacterial ribosomal protein bL21 family. In terms of assembly, part of the 50S ribosomal subunit. Contacts protein L20.

In terms of biological role, this protein binds to 23S rRNA in the presence of protein L20. This chain is Large ribosomal subunit protein bL21, found in Streptomyces griseus subsp. griseus (strain JCM 4626 / CBS 651.72 / NBRC 13350 / KCC S-0626 / ISP 5235).